The chain runs to 259 residues: Protein-L-isoaspartate O-methyltransferase 1 (259 aa).

The active site involves Ser-109.

This sequence belongs to the methyltransferase superfamily. L-isoaspartyl/D-aspartyl protein methyltransferase family.

The protein resides in the cytoplasm. The catalysed reaction is [protein]-L-isoaspartate + S-adenosyl-L-methionine = [protein]-L-isoaspartate alpha-methyl ester + S-adenosyl-L-homocysteine. Catalyzes the methyl esterification of L-isoaspartyl residues in peptides and proteins that result from spontaneous decomposition of normal L-aspartyl and L-asparaginyl residues. It plays a role in the repair and/or degradation of damaged proteins. The polypeptide is Protein-L-isoaspartate O-methyltransferase 1 (Cupriavidus necator (strain ATCC 17699 / DSM 428 / KCTC 22496 / NCIMB 10442 / H16 / Stanier 337) (Ralstonia eutropha)).